Reading from the N-terminus, the 155-residue chain is Putative methyl-CpG-binding domain protein 12 (155 aa).

The CW-type zinc-finger motif lies at 1 to 53; it reads MVQCTDCKKWRLIPSMQHYNIIKETQLQTPFVCGTTSGWTPNMSCNVPQDGTT. The MBD-associated domain (MAD) motif lies at 3–45; that stretch reads QCTDCKKWRLIPSMQHYNIIKETQLQTPFVCGTTSGWTPNMSC. 4 residues coordinate Zn(2+): cysteine 4, cysteine 7, cysteine 33, and cysteine 45. The MBD domain maps to 53-126; sequence TCDTWPSIPP…SQFSFQIPKP (74 aa). The segment at 130-155 is disordered; it reads NYVKKRTRPVKRRKSSKDNNCEKGKK. Positions 133-144 are enriched in basic residues; it reads KKRTRPVKRRKS. Residues 140 to 147 carry the Nuclear localization signal motif; that stretch reads KRRKSSKD. Basic and acidic residues predominate over residues 145 to 155; it reads SKDNNCEKGKK.

Its subcellular location is the nucleus. Functionally, probable transcriptional regulator. This Arabidopsis thaliana (Mouse-ear cress) protein is Putative methyl-CpG-binding domain protein 12 (MBD12).